The chain runs to 40 residues: Photosystem I reaction center subunit IX (40 aa).

The helical transmembrane segment at 4-24 (FFESWPMAAVLWVWLTAGIIV) threads the bilayer.

The protein belongs to the PsaJ family.

It is found in the cellular thylakoid membrane. May help in the organization of the PsaE and PsaF subunits. This chain is Photosystem I reaction center subunit IX, found in Prochlorococcus marinus (strain MIT 9313).